The sequence spans 581 residues: Arginine--tRNA ligase (581 aa).

Residues P126–H136 carry the 'HIGH' region motif.

This sequence belongs to the class-I aminoacyl-tRNA synthetase family. In terms of assembly, monomer.

The protein resides in the cytoplasm. It carries out the reaction tRNA(Arg) + L-arginine + ATP = L-arginyl-tRNA(Arg) + AMP + diphosphate. The protein is Arginine--tRNA ligase of Shewanella amazonensis (strain ATCC BAA-1098 / SB2B).